Here is a 434-residue protein sequence, read N- to C-terminus: GTPase Obg (434 aa).

The region spanning 4–162 (ADFIDRIVIY…RKLVLELKLL (159 aa)) is the Obg domain. The OBG-type G domain maps to 163 to 333 (ADVGLVGYPN…IVYKLAEIVK (171 aa)). GTP contacts are provided by residues 169 to 176 (GYPNVGKS), 194 to 198 (FTTTI), 215 to 218 (DIPG), 285 to 288 (NKID), and 314 to 316 (SII). Mg(2+) contacts are provided by S176 and T196. One can recognise an OCT domain in the interval 355-434 (LWKELPERFN…VAQRAFEYKE (80 aa)).

Belongs to the TRAFAC class OBG-HflX-like GTPase superfamily. OBG GTPase family. As to quaternary structure, monomer. The cofactor is Mg(2+).

The protein resides in the cytoplasm. Its function is as follows. An essential GTPase which binds GTP, GDP and possibly (p)ppGpp with moderate affinity, with high nucleotide exchange rates and a fairly low GTP hydrolysis rate. Plays a role in control of the cell cycle, stress response, ribosome biogenesis and in those bacteria that undergo differentiation, in morphogenesis control. The polypeptide is GTPase Obg (Thermosipho africanus (strain TCF52B)).